Reading from the N-terminus, the 326-residue chain is Probable magnesium transporter NIPA7 (326 aa).

At M1–D4 the chain is on the extracellular side. The chain crosses the membrane as a helical span at residues N5–L25. Over K26–P51 the chain is Cytoplasmic. Residues L52–V72 form a helical membrane-spanning segment. The Extracellular segment spans residues Y73–A76. Residues V77 to L97 form a helical membrane-spanning segment. The Cytoplasmic segment spans residues L98 to K104. A helical transmembrane segment spans residues M105–P125. Topologically, residues Q126 to Q142 are extracellular. Residues P143–C163 traverse the membrane as a helical segment. The Cytoplasmic segment spans residues E164–Q169. Residues T170 to I190 traverse the membrane as a helical segment. At K191 to Y209 the chain is on the extracellular side. The chain crosses the membrane as a helical span at residues P210 to L230. Topologically, residues N231–A240 are cytoplasmic. Residues I241 to M261 traverse the membrane as a helical segment. Topologically, residues F262 to S272 are extracellular. Residues I273–T293 traverse the membrane as a helical segment. The Cytoplasmic segment spans residues R294–Y326.

It belongs to the NIPA (TC 2.A.7) family. Homodimer.

The protein resides in the cell membrane. The protein localises to the early endosome. In terms of biological role, acts as a Mg(2+) transporter. Can also transport other divalent cations such as Fe(2+), Sr(2+), Ba(2+), Mn(2+) and Co(2+) but to a much less extent than Mg(2+). This chain is Probable magnesium transporter NIPA7, found in Arabidopsis thaliana (Mouse-ear cress).